A 1741-amino-acid polypeptide reads, in one-letter code: S-layer protein (1741 aa).

Positions 894–904 (SFTSDSANGSG) are enriched in polar residues. Residues 894-913 (SFTSDSANGSGHSVEGGTGD) are disordered.

Glycosylated.

It is found in the secreted. The protein resides in the cell wall. Its subcellular location is the S-layer. Its function is as follows. S-layer protein. The S-layer is a paracrystalline mono-layered assembly of proteins which coats the surface of bacteria. Under laboratory conditions, has a supportive but not a critical role in the function of the cyanobacterium. Shows no apparent hemolytic activity against sheep erythrocytes, however, a slight hemolytic activity is detected during the conformational change caused by the rebinding of Ca(2+). The polypeptide is S-layer protein (Synechocystis sp. (strain ATCC 27184 / PCC 6803 / Kazusa)).